Consider the following 156-residue polypeptide: Large ribosomal subunit protein uL15 (156 aa).

Residues 1–16 (MVRRFKRGTKYRRGSR) are compositionally biased toward basic residues. Residues 1 to 37 (MVRRFKRGTKYRRGSRTHGWGRVGQHRKSGGSGGKGM) are disordered.

It belongs to the universal ribosomal protein uL15 family. As to quaternary structure, part of the 50S ribosomal subunit.

Functionally, binds to the 23S rRNA. In Pyrobaculum aerophilum (strain ATCC 51768 / DSM 7523 / JCM 9630 / CIP 104966 / NBRC 100827 / IM2), this protein is Large ribosomal subunit protein uL15.